A 235-amino-acid chain; its full sequence is tRNA (guanine-N(1)-)-methyltransferase (235 aa).

Residues glycine 114 and 134-139 (IGDYIL) each bind S-adenosyl-L-methionine.

It belongs to the RNA methyltransferase TrmD family. Homodimer.

It localises to the cytoplasm. The catalysed reaction is guanosine(37) in tRNA + S-adenosyl-L-methionine = N(1)-methylguanosine(37) in tRNA + S-adenosyl-L-homocysteine + H(+). Specifically methylates guanosine-37 in various tRNAs. The sequence is that of tRNA (guanine-N(1)-)-methyltransferase from Ehrlichia ruminantium (strain Welgevonden).